The following is a 270-amino-acid chain: Flavin-dependent thymidylate synthase (270 aa).

One can recognise a ThyX domain in the interval 13-218 (GFVRLVDQMG…PLAWAAFEEH (206 aa)). Residues Ser59, 82–84 (RHR), and Glu90 each bind FAD. Residues 79–82 (QWFR), 90–94 (EISGR), and Arg157 contribute to the dUMP site. Positions 82-92 (RHRTASVNEIS) match the ThyX motif motif. FAD is bound by residues 173–175 (DLH) and His179. Residue Arg184 participates in dUMP binding. Arg184 (involved in ionization of N3 of dUMP, leading to its activation) is an active-site residue.

Belongs to the thymidylate synthase ThyX family. In terms of assembly, homotetramer. It depends on FAD as a cofactor.

It catalyses the reaction dUMP + (6R)-5,10-methylene-5,6,7,8-tetrahydrofolate + NADPH + H(+) = dTMP + (6S)-5,6,7,8-tetrahydrofolate + NADP(+). Its pathway is pyrimidine metabolism; dTTP biosynthesis. Functionally, catalyzes the reductive methylation of 2'-deoxyuridine-5'-monophosphate (dUMP) to 2'-deoxythymidine-5'-monophosphate (dTMP) while utilizing 5,10-methylenetetrahydrofolate (mTHF) as the methyl donor, and NADPH and FADH(2) as the reductant. This Thermus thermophilus (strain ATCC BAA-163 / DSM 7039 / HB27) protein is Flavin-dependent thymidylate synthase.